Consider the following 432-residue polypeptide: D-amino acid dehydrogenase (432 aa).

3–17 (VVILGSGVVGVASAW) contributes to the FAD binding site.

The protein belongs to the DadA oxidoreductase family. It depends on FAD as a cofactor.

The enzyme catalyses a D-alpha-amino acid + A + H2O = a 2-oxocarboxylate + AH2 + NH4(+). The protein operates within amino-acid degradation; D-alanine degradation; NH(3) and pyruvate from D-alanine: step 1/1. Its function is as follows. Oxidative deamination of D-amino acids. This chain is D-amino acid dehydrogenase, found in Escherichia coli O45:K1 (strain S88 / ExPEC).